The sequence spans 373 residues: Integrator complex subunit 15 (373 aa).

Belongs to the Integrator subunit 15 family. As to quaternary structure, belongs to the multiprotein complex Integrator, at least composed of IntS1, IntS2, IntS3, IntS4, omd/IntS5, IntS6, defl/IntS7, IntS8, IntS9, IntS10, IntS11, IntS12, asun/IntS13, IntS14 and IntS15. The core complex associates with protein phosphatase 2A subunits mts/PP2A and Pp2A-29B, to form the Integrator-PP2A (INTAC) complex.

The protein resides in the nucleus. Functionally, component of the integrator complex, a multiprotein complex that terminates RNA polymerase II (Pol II) transcription in the promoter-proximal region of genes. The integrator complex provides a quality checkpoint during transcription elongation by driving premature transcription termination of transcripts that are unfavorably configured for transcriptional elongation: the complex terminates transcription by (1) catalyzing dephosphorylation of the C-terminal domain (CTD) of Pol II subunit Rbp1 and Spt5, and (2) degrading the exiting nascent RNA transcript via endonuclease activity. The integrator complex is also involved in the 3'-end processing of the U7 snRNA, and also the spliceosomal snRNAs U1, U2, U4 and U5. The protein is Integrator complex subunit 15 of Drosophila melanogaster (Fruit fly).